The following is a 664-amino-acid chain: Glycine--tRNA ligase beta subunit (664 aa).

The protein belongs to the class-II aminoacyl-tRNA synthetase family. Tetramer of two alpha and two beta subunits.

The protein resides in the cytoplasm. It catalyses the reaction tRNA(Gly) + glycine + ATP = glycyl-tRNA(Gly) + AMP + diphosphate. This chain is Glycine--tRNA ligase beta subunit, found in Rickettsia peacockii (strain Rustic).